Reading from the N-terminus, the 1264-residue chain is Regulator of G-protein signaling 22 (1264 aa).

A disordered region spans residues 565–587 (EEFSLSQPPKSPNKSPEVKTATQ). Residues 568–578 (SLSQPPKSPNK) show a composition bias toward polar residues. 2 RGS domains span residues 852-980 (KFSD…AARQ) and 1021-1145 (AFRK…TDEN). Residues 1142–1174 (TDENIMSVLERRQEYNKQKKKLAVLEDEKSGKD) are a coiled coil.

Interacts with GNA11, GNA12 and GNA13. Testis-specific. Expressed in Leydig cells and spermatogenic cells from the spermatogonia to spermatid stages (at protein level).

The protein localises to the cytoplasm. Its subcellular location is the nucleus. Its function is as follows. Inhibits signal transduction by increasing the GTPase activity of G protein alpha subunits thereby driving them into their inactive GDP-bound form. The polypeptide is Regulator of G-protein signaling 22 (RGS22) (Homo sapiens (Human)).